The following is a 385-amino-acid chain: Phosphate acyltransferase (385 aa).

Low complexity predominate over residues 1–17 (MAAGTSIGTTPGGSTSP). The segment at 1–28 (MAAGTSIGTTPGGSTSPETPPEHGLTGT) is disordered.

This sequence belongs to the PlsX family. As to quaternary structure, homodimer. Probably interacts with PlsY.

The protein localises to the cytoplasm. It catalyses the reaction a fatty acyl-[ACP] + phosphate = an acyl phosphate + holo-[ACP]. It functions in the pathway lipid metabolism; phospholipid metabolism. Catalyzes the reversible formation of acyl-phosphate (acyl-PO(4)) from acyl-[acyl-carrier-protein] (acyl-ACP). This enzyme utilizes acyl-ACP as fatty acyl donor, but not acyl-CoA. This Dinoroseobacter shibae (strain DSM 16493 / NCIMB 14021 / DFL 12) protein is Phosphate acyltransferase.